The following is a 317-amino-acid chain: L-lactate dehydrogenase (317 aa).

NAD(+) contacts are provided by Val16, Asp37, and Tyr69. Residues Gln86, Arg92, and 124 to 127 contribute to the substrate site; that span reads NPVD. NAD(+) is bound by residues 122–124 and Ser147; that span reads ASN. 152–155 is a binding site for substrate; sequence DSAR. Residue His179 is the Proton acceptor of the active site. Tyr223 bears the Phosphotyrosine mark. Residue Thr232 participates in substrate binding.

The protein belongs to the LDH/MDH superfamily. LDH family. In terms of assembly, homotetramer.

The protein localises to the cytoplasm. The catalysed reaction is (S)-lactate + NAD(+) = pyruvate + NADH + H(+). It participates in fermentation; pyruvate fermentation to lactate; (S)-lactate from pyruvate: step 1/1. Functionally, catalyzes the conversion of lactate to pyruvate. This chain is L-lactate dehydrogenase, found in Mycoplasma capricolum subsp. capricolum (strain California kid / ATCC 27343 / NCTC 10154).